The sequence spans 243 residues: tRNA (guanine-N(1)-)-methyltransferase (243 aa).

Residues G111 and I131–L136 each bind S-adenosyl-L-methionine.

It belongs to the RNA methyltransferase TrmD family. As to quaternary structure, homodimer.

Its subcellular location is the cytoplasm. It carries out the reaction guanosine(37) in tRNA + S-adenosyl-L-methionine = N(1)-methylguanosine(37) in tRNA + S-adenosyl-L-homocysteine + H(+). In terms of biological role, specifically methylates guanosine-37 in various tRNAs. The protein is tRNA (guanine-N(1)-)-methyltransferase of Brevibacillus brevis (strain 47 / JCM 6285 / NBRC 100599).